The sequence spans 156 residues: Ribosomal RNA large subunit methyltransferase H (156 aa).

S-adenosyl-L-methionine-binding positions include leucine 73, glycine 104, and 123-128; that span reads LSSLTL.

This sequence belongs to the RNA methyltransferase RlmH family. Homodimer.

It is found in the cytoplasm. It carries out the reaction pseudouridine(1915) in 23S rRNA + S-adenosyl-L-methionine = N(3)-methylpseudouridine(1915) in 23S rRNA + S-adenosyl-L-homocysteine + H(+). In terms of biological role, specifically methylates the pseudouridine at position 1915 (m3Psi1915) in 23S rRNA. In Neisseria gonorrhoeae (strain NCCP11945), this protein is Ribosomal RNA large subunit methyltransferase H.